We begin with the raw amino-acid sequence, 142 residues long: Galactose-6-phosphate isomerase subunit LacA (142 aa).

It belongs to the LacAB/RpiB family. As to quaternary structure, heteromultimeric protein consisting of LacA and LacB.

It carries out the reaction aldehydo-D-galactose 6-phosphate = keto-D-tagatose 6-phosphate. It functions in the pathway carbohydrate metabolism; D-galactose 6-phosphate degradation; D-tagatose 6-phosphate from D-galactose 6-phosphate: step 1/1. The chain is Galactose-6-phosphate isomerase subunit LacA from Staphylococcus epidermidis (strain ATCC 35984 / DSM 28319 / BCRC 17069 / CCUG 31568 / BM 3577 / RP62A).